Reading from the N-terminus, the 351-residue chain is N-acetyl-gamma-glutamyl-phosphate reductase (351 aa).

C154 is a catalytic residue.

This sequence belongs to the NAGSA dehydrogenase family. Type 1 subfamily.

The protein localises to the cytoplasm. It carries out the reaction N-acetyl-L-glutamate 5-semialdehyde + phosphate + NADP(+) = N-acetyl-L-glutamyl 5-phosphate + NADPH + H(+). It functions in the pathway amino-acid biosynthesis; L-arginine biosynthesis; N(2)-acetyl-L-ornithine from L-glutamate: step 3/4. Functionally, catalyzes the NADPH-dependent reduction of N-acetyl-5-glutamyl phosphate to yield N-acetyl-L-glutamate 5-semialdehyde. In Prochlorococcus marinus (strain AS9601), this protein is N-acetyl-gamma-glutamyl-phosphate reductase.